The following is a 359-amino-acid chain: DNA polymerase IV (359 aa).

Positions 4–185 constitute a UmuC domain; the sequence is IIHIDMDCYF…LSLRKIPGVG (182 aa). The Mg(2+) site is built by Asp-8 and Asp-103. Glu-104 is a catalytic residue.

The protein belongs to the DNA polymerase type-Y family. As to quaternary structure, monomer. The cofactor is Mg(2+).

The protein resides in the cytoplasm. It carries out the reaction DNA(n) + a 2'-deoxyribonucleoside 5'-triphosphate = DNA(n+1) + diphosphate. Poorly processive, error-prone DNA polymerase involved in untargeted mutagenesis. Copies undamaged DNA at stalled replication forks, which arise in vivo from mismatched or misaligned primer ends. These misaligned primers can be extended by PolIV. Exhibits no 3'-5' exonuclease (proofreading) activity. May be involved in translesional synthesis, in conjunction with the beta clamp from PolIII. The protein is DNA polymerase IV of Shewanella sp. (strain MR-4).